The chain runs to 126 residues: MAQGSGSAERALVLGVVLVFLVFNCEVAESVVYTVGDGGGWTFGTSGWPAGKTFRAGDVLVFKYNPAVHNVVSVPAGGYKSCTASPGSRVFKSGDDRITLSRGTNYFICSVPGHCQGGLKIAVTAA.

The signal sequence occupies residues 1-30 (MAQGSGSAERALVLGVVLVFLVFNCEVAES). The region spanning 31-126 (VVYTVGDGGG…GGLKIAVTAA (96 aa)) is the Phytocyanin domain. Positions 69, 109, and 114 each coordinate Cu cation. Cysteine 82 and cysteine 115 are disulfide-bonded.

As to expression, strongly expressed in stigma and style and to a lesser extent in leaves, ovary and petals. Not detected in pollen tubes, mature anthers or roots.

Functionally, diffusible chemotropic factor that induces pollen tube chemotropism. The sequence is that of Chemocyanin from Lilium longiflorum (Trumpet lily).